We begin with the raw amino-acid sequence, 286 residues long: Probable endonuclease 4 (286 aa).

Zn(2+)-binding residues include histidine 67, histidine 107, glutamate 146, aspartate 180, histidine 183, histidine 217, aspartate 230, histidine 232, and glutamate 262.

It belongs to the AP endonuclease 2 family. Requires Zn(2+) as cofactor.

It catalyses the reaction Endonucleolytic cleavage to 5'-phosphooligonucleotide end-products.. Its function is as follows. Endonuclease IV plays a role in DNA repair. It cleaves phosphodiester bonds at apurinic or apyrimidinic (AP) sites, generating a 3'-hydroxyl group and a 5'-terminal sugar phosphate. The protein is Probable endonuclease 4 of Methanosphaerula palustris (strain ATCC BAA-1556 / DSM 19958 / E1-9c).